The chain runs to 241 residues: Sugar fermentation stimulation protein homolog (241 aa).

The protein belongs to the SfsA family.

This Jannaschia sp. (strain CCS1) protein is Sugar fermentation stimulation protein homolog.